Consider the following 140-residue polypeptide: Phosphoribosyl-AMP cyclohydrolase (140 aa).

D78 is a Mg(2+) binding site. C79 provides a ligand contact to Zn(2+). Mg(2+) contacts are provided by D80 and D82. Residues C96 and C103 each coordinate Zn(2+).

It belongs to the PRA-CH family. As to quaternary structure, homodimer. Mg(2+) is required as a cofactor. Zn(2+) serves as cofactor.

Its subcellular location is the cytoplasm. The catalysed reaction is 1-(5-phospho-beta-D-ribosyl)-5'-AMP + H2O = 1-(5-phospho-beta-D-ribosyl)-5-[(5-phospho-beta-D-ribosylamino)methylideneamino]imidazole-4-carboxamide. Its pathway is amino-acid biosynthesis; L-histidine biosynthesis; L-histidine from 5-phospho-alpha-D-ribose 1-diphosphate: step 3/9. Its function is as follows. Catalyzes the hydrolysis of the adenine ring of phosphoribosyl-AMP. In Ralstonia nicotianae (strain ATCC BAA-1114 / GMI1000) (Ralstonia solanacearum), this protein is Phosphoribosyl-AMP cyclohydrolase.